Here is a 148-residue protein sequence, read N- to C-terminus: UPF0735 ACT domain-containing protein Dred_1164 (148 aa).

One can recognise an ACT domain in the interval 72–147 (TLALLMEHQP…GVREVRLVGQ (76 aa)).

It belongs to the UPF0735 family.

This Desulforamulus reducens (strain ATCC BAA-1160 / DSM 100696 / MI-1) (Desulfotomaculum reducens) protein is UPF0735 ACT domain-containing protein Dred_1164.